The primary structure comprises 61 residues: Large ribosomal subunit protein eL37 (61 aa).

Zn(2+) contacts are provided by Cys19, Cys22, Cys34, and Cys37. Residues 19–37 (CRRCGRNAYNVSKHYCAAC) form a C4-type zinc finger.

The protein belongs to the eukaryotic ribosomal protein eL37 family. Zn(2+) serves as cofactor.

Binds to the 23S rRNA. The protein is Large ribosomal subunit protein eL37 (rpl37e) of Saccharolobus solfataricus (strain ATCC 35092 / DSM 1617 / JCM 11322 / P2) (Sulfolobus solfataricus).